The sequence spans 217 residues: MNAPHHPAHSTVRTKKLPPLRVGVGGPVGSGKTTLLEMLCKAMREQYDLVAITNDIYTKEDQRLLTVAGALPAERIMGVETGGCPHTAIREDASINLEAVDRMLTRFPDADIVFIESGGDNLAATFSPELSDLTIYVIDVAGGEKIPRKGGPGITKSDLLVINKTDLAPMVGANLEVMAADAKKMRGERPFVMCNLKALDGLDVVVKFIEKKGLLKV.

Residues 1–18 show a composition bias toward basic residues; sequence MNAPHHPAHSTVRTKKLP. Positions 1–24 are disordered; it reads MNAPHHPAHSTVRTKKLPPLRVGV. A GTP-binding site is contributed by 26 to 33; sequence GPVGSGKT.

This sequence belongs to the SIMIBI class G3E GTPase family. UreG subfamily. In terms of assembly, homodimer. UreD, UreF and UreG form a complex that acts as a GTP-hydrolysis-dependent molecular chaperone, activating the urease apoprotein by helping to assemble the nickel containing metallocenter of UreC. The UreE protein probably delivers the nickel.

The protein resides in the cytoplasm. Functionally, facilitates the functional incorporation of the urease nickel metallocenter. This process requires GTP hydrolysis, probably effectuated by UreG. The protein is Urease accessory protein UreG of Paraburkholderia xenovorans (strain LB400).